Consider the following 301-residue polypeptide: Recombination-associated protein RdgC (301 aa).

This sequence belongs to the RdgC family.

Its subcellular location is the cytoplasm. It is found in the nucleoid. Its function is as follows. May be involved in recombination. This is Recombination-associated protein RdgC from Xanthomonas oryzae pv. oryzae (strain KACC10331 / KXO85).